Reading from the N-terminus, the 426-residue chain is Glutamate-1-semialdehyde 2,1-aminomutase (426 aa).

Lys-265 bears the N6-(pyridoxal phosphate)lysine mark.

It belongs to the class-III pyridoxal-phosphate-dependent aminotransferase family. HemL subfamily. In terms of assembly, homodimer. It depends on pyridoxal 5'-phosphate as a cofactor.

The protein resides in the cytoplasm. The catalysed reaction is (S)-4-amino-5-oxopentanoate = 5-aminolevulinate. The protein operates within porphyrin-containing compound metabolism; protoporphyrin-IX biosynthesis; 5-aminolevulinate from L-glutamyl-tRNA(Glu): step 2/2. This is Glutamate-1-semialdehyde 2,1-aminomutase from Salmonella arizonae (strain ATCC BAA-731 / CDC346-86 / RSK2980).